A 307-amino-acid polypeptide reads, in one-letter code: Aspartate carbamoyltransferase catalytic subunit (307 aa).

Carbamoyl phosphate-binding residues include arginine 54 and threonine 55. L-aspartate is bound at residue lysine 83. Positions 104, 132, and 135 each coordinate carbamoyl phosphate. L-aspartate-binding residues include arginine 165 and arginine 228. Positions 267 and 268 each coordinate carbamoyl phosphate.

It belongs to the aspartate/ornithine carbamoyltransferase superfamily. ATCase family. Heterododecamer (2C3:3R2) of six catalytic PyrB chains organized as two trimers (C3), and six regulatory PyrI chains organized as three dimers (R2).

It carries out the reaction carbamoyl phosphate + L-aspartate = N-carbamoyl-L-aspartate + phosphate + H(+). It functions in the pathway pyrimidine metabolism; UMP biosynthesis via de novo pathway; (S)-dihydroorotate from bicarbonate: step 2/3. Its function is as follows. Catalyzes the condensation of carbamoyl phosphate and aspartate to form carbamoyl aspartate and inorganic phosphate, the committed step in the de novo pyrimidine nucleotide biosynthesis pathway. This is Aspartate carbamoyltransferase catalytic subunit from Clostridium botulinum (strain Alaska E43 / Type E3).